The primary structure comprises 363 residues: Ferredoxin--NADP reductase, cyanelle (363 aa).

The transit peptide at 1–65 directs the protein to the cyanelle; the sequence is MAFVASVPVF…TFEVDTTIRA (65 aa). An FAD-binding FR-type domain is found at 84 to 206; that stretch reads ANPYIGKCIY…TGPVGTTMLM (123 aa). Residues 142–145, 163–165, Tyr-169, 180–182, and Thr-221 contribute to the FAD site; these read RLYS, SVK, and VCS. Residues Ser-145 and Lys-165 each coordinate NADP(+). Residues Thr-221, 253 to 254, 283 to 284, Lys-293, 322 to 323, and Glu-361 each bind NADP(+); these read VP, SR, and GL.

Belongs to the ferredoxin--NADP reductase type 1 family. FAD is required as a cofactor.

It is found in the plastid. The protein localises to the cyanelle stroma. The protein resides in the cyanelle thylakoid membrane. It carries out the reaction 2 reduced [2Fe-2S]-[ferredoxin] + NADP(+) + H(+) = 2 oxidized [2Fe-2S]-[ferredoxin] + NADPH. In terms of biological role, may play a key role in regulating the relative amounts of cyclic and non-cyclic electron flow to meet the demands of the plant for ATP and reducing power. This Cyanophora paradoxa protein is Ferredoxin--NADP reductase, cyanelle (PETH).